Here is a 1378-residue protein sequence, read N- to C-terminus: Protein CLASP-1 (1378 aa).

An HEAT 1 repeat occupies 168 to 206 (LIPQLCRLTNDPNSEVRDVSTQCLIDLMVYGGKPIVAKI). 3 disordered regions span residues 231 to 254 (RGDL…RNSL), 266 to 325 (IHPS…TRSS), and 590 to 725 (MLRD…HQTP). Low complexity-rich tracts occupy residues 269–283 (SAST…RLST) and 610–619 (NQKQQPNQQN). 2 stretches are compositionally biased toward polar residues: residues 620-630 (ISQKFLSQRSA) and 637-648 (IQLSVKPQTTAI). Positions 664-676 (SSTSTSFSAVRSS) are enriched in low complexity. Polar residues predominate over residues 677 to 690 (GYGQNQSTTPNRAK). Residues 704–721 (TNGNNNNKSSSSSPSTST) are compositionally biased toward low complexity. The stretch at 740 to 767 (ASLTQEQANCLQNAMNTAKDEMSKNNED) forms a coiled coil. Basic and acidic residues predominate over residues 775-784 (IRKTPPKEVP). Residues 775-823 (IRKTPPKEVPRSYNNSPFKPSNLDSSVHRSYNNNSPFRPSSGSVGSGSN) form a disordered region. Positions 786–812 (SYNNSPFKPSNLDSSVHRSYNNNSPFR) are enriched in polar residues. An HEAT 2 repeat occupies 1305-1341 (HLIVNDVAPCFVTAYESMSSTVRKCAVFGLVALVQRV).

It belongs to the CLASP family.

It is found in the cytoplasm. The protein localises to the cytoskeleton. Its function is as follows. Microtubule plus-end tracking protein that promotes the stabilization of dynamic microtubules. Operates redundantly with cls-2 and cls-3 in regulating microtubule processes which position the spindle during asymmetric cell division. This chain is Protein CLASP-1 (cls-1), found in Caenorhabditis elegans.